The primary structure comprises 124 residues: UPF0357 protein C1687.07 (124 aa).

An N-terminal signal peptide occupies residues 1 to 24 (MASFHIIVSYVTVVLAIIIAITFA).

It belongs to the UPF0357 family.

This chain is UPF0357 protein C1687.07, found in Schizosaccharomyces pombe (strain 972 / ATCC 24843) (Fission yeast).